We begin with the raw amino-acid sequence, 698 residues long: Polyphosphate kinase 1 (698 aa).

ATP is bound at residue Asn46. Residues Arg377 and Arg407 each coordinate Mg(2+). Residue His437 is the Phosphohistidine intermediate of the active site. Tyr470, Arg566, and His594 together coordinate ATP.

The protein belongs to the polyphosphate kinase 1 (PPK1) family. Mg(2+) is required as a cofactor. Post-translationally, an intermediate of this reaction is the autophosphorylated ppk in which a phosphate is covalently linked to a histidine residue through a N-P bond.

It carries out the reaction [phosphate](n) + ATP = [phosphate](n+1) + ADP. Catalyzes the reversible transfer of the terminal phosphate of ATP to form a long-chain polyphosphate (polyP). This chain is Polyphosphate kinase 1, found in Chlorobaculum tepidum (strain ATCC 49652 / DSM 12025 / NBRC 103806 / TLS) (Chlorobium tepidum).